A 338-amino-acid chain; its full sequence is Mitochondrial transcription factor 1 (338 aa).

Residues leucine 23, aspartate 76, aspartate 100, and asparagine 136 each coordinate S-adenosyl-L-methionine.

Belongs to the class I-like SAM-binding methyltransferase superfamily. rRNA adenine N(6)-methyltransferase family.

It is found in the mitochondrion. In terms of biological role, mitochondrial transcription factor that confers selective promoter recognition on the core subunit of the yeast mitochondrial RNA polymerase. Interacts with DNA in a non-specific manner. The chain is Mitochondrial transcription factor 1 (MTF1) from Lachancea kluyveri (Yeast).